Here is a 310-residue protein sequence, read N- to C-terminus: Ribosomal RNA large subunit methyltransferase F (310 aa).

Belongs to the methyltransferase superfamily. METTL16/RlmF family.

The protein localises to the cytoplasm. It catalyses the reaction adenosine(1618) in 23S rRNA + S-adenosyl-L-methionine = N(6)-methyladenosine(1618) in 23S rRNA + S-adenosyl-L-homocysteine + H(+). Specifically methylates the adenine in position 1618 of 23S rRNA. This is Ribosomal RNA large subunit methyltransferase F from Psychromonas ingrahamii (strain DSM 17664 / CCUG 51855 / 37).